Consider the following 486-residue polypeptide: Membrane-bound lytic murein transglycosylase F (486 aa).

The first 21 residues, 1–21 (MTRIKLSYFTIGLVALLLALA), serve as a signal peptide directing secretion. A non-LT domain region spans residues 22–268 (LWPNIPWRNG…RLEEKYLGHV (247 aa)). Residues 269–486 (GSFDYVDTKT…VVGPGWSIGD (218 aa)) are LT domain. E313 is an active-site residue.

It in the N-terminal section; belongs to the bacterial solute-binding protein 3 family. This sequence in the C-terminal section; belongs to the transglycosylase Slt family.

It localises to the cell outer membrane. It catalyses the reaction Exolytic cleavage of the (1-&gt;4)-beta-glycosidic linkage between N-acetylmuramic acid (MurNAc) and N-acetylglucosamine (GlcNAc) residues in peptidoglycan, from either the reducing or the non-reducing ends of the peptidoglycan chains, with concomitant formation of a 1,6-anhydrobond in the MurNAc residue.. Its function is as follows. Murein-degrading enzyme that degrades murein glycan strands and insoluble, high-molecular weight murein sacculi, with the concomitant formation of a 1,6-anhydromuramoyl product. Lytic transglycosylases (LTs) play an integral role in the metabolism of the peptidoglycan (PG) sacculus. Their lytic action creates space within the PG sacculus to allow for its expansion as well as for the insertion of various structures such as secretion systems and flagella. This Yersinia pseudotuberculosis serotype I (strain IP32953) protein is Membrane-bound lytic murein transglycosylase F.